We begin with the raw amino-acid sequence, 211 residues long: Mitotic spindle assembly checkpoint protein MAD2B (211 aa).

The region spanning 13–203 is the HORMA domain; that stretch reads QVVADILCEF…SDILKMQLYV (191 aa).

In terms of assembly, homooligomer. Interacts with rev1. Interacts with rev3l. Interacts with fzr1 (in complex with the anaphase promoting complex APC). May interact with cdc20.

Its subcellular location is the nucleus. It localises to the cytoplasm. It is found in the cytoskeleton. The protein localises to the spindle. Its function is as follows. Adapter protein able to interact with different proteins and involved in different biological processes. Mediates the interaction between the error-prone DNA polymerase zeta catalytic subunit rev3l and the inserter polymerase rev1, thereby mediating the second polymerase switching in translesion DNA synthesis. Translesion DNA synthesis releases the replication blockade of replicative polymerases, stalled in presence of DNA lesions. May also play a role in signal transduction in response to DNA damage. May regulate the activation of the anaphase promoting complex APC thereby regulating progression through the cell cycle. Through transcriptional regulation may play a role in epithelial-mesenchymal transdifferentiation. This is Mitotic spindle assembly checkpoint protein MAD2B (mad2l2) from Danio rerio (Zebrafish).